A 352-amino-acid polypeptide reads, in one-letter code: Small glutamine-rich tetratricopeptide repeat-containing protein 2 (352 aa).

Positions 80–97 (PAAASSSSTAPAAAAATP) are enriched in low complexity. A disordered region spans residues 80-103 (PAAASSSSTAPAAAAATPSDEDLA). TPR repeat units lie at residues 105-138 (AEQL…NPNS), 140-172 (VYFS…DPKF), and 173-206 (GKAY…DPSN). The segment at 217–236 (KEQLSSSSSSNANDATASRG) is disordered.

Belongs to the SGT family.

Functionally, co-chaperone that binds to the molecular chaperone Hsp70 and regulates Hsp70 ATPase activity. This is Small glutamine-rich tetratricopeptide repeat-containing protein 2 from Mycosarcoma maydis (Corn smut fungus).